Here is a 432-residue protein sequence, read N- to C-terminus: Gamma-glutamyl phosphate reductase (432 aa).

The protein belongs to the gamma-glutamyl phosphate reductase family.

The protein resides in the cytoplasm. It carries out the reaction L-glutamate 5-semialdehyde + phosphate + NADP(+) = L-glutamyl 5-phosphate + NADPH + H(+). It functions in the pathway amino-acid biosynthesis; L-proline biosynthesis; L-glutamate 5-semialdehyde from L-glutamate: step 2/2. Catalyzes the NADPH-dependent reduction of L-glutamate 5-phosphate into L-glutamate 5-semialdehyde and phosphate. The product spontaneously undergoes cyclization to form 1-pyrroline-5-carboxylate. In Brachyspira hyodysenteriae (strain ATCC 49526 / WA1), this protein is Gamma-glutamyl phosphate reductase.